The sequence spans 283 residues: Non-selective voltage-gated ion channel VDAC3 (283 aa).

Residue Cys2 is modified to N-acetylcysteine. Position 4 is a phosphothreonine (Thr4). An N6-acetyllysine mark is found at Lys12, Lys15, and Lys20. Beta stranded transmembrane passes span 26–35 and 39–47; these read MVKIDLRTKS and VEFSTSGHA. Lys53 participates in a covalent cross-link: Glycyl lysine isopeptide (Lys-Gly) (interchain with G-Cter in ubiquitin). 3 beta stranded membrane-spanning segments follow: residues 54–64, 69–76, and 80–89; these read ASGNLETKYKI, LTFTQKWN, and TLGTEISWEN. Lys90 is subject to N6-acetyllysine. The chain crosses the membrane as a beta stranded span at residues 95 to 104; the sequence is LKLTLDTIFV. Residues Lys109 and Lys110 each participate in a glycyl lysine isopeptide (Lys-Gly) (interchain with G-Cter in ubiquitin) cross-link. 10 consecutive transmembrane segments (beta stranded) span residues 111-120, 123-130, 137-145, 150-158, 163-175, 178-185, 189-198, 202-211, 218-227, and 231-238; these read SGKLKASYKR, FSLGSNVD, TIYGWAVLA, LAGYQMSFD, KLSQ…GYKA, FQLHTHVN, EFGGSIYQKV, IETSINLAWT, RFGIAAKYKL, and TSLSAKVN. The residue at position 241 (Ser241) is a Phosphoserine. Residues 242-244 and 260-264 each bind NAD(+); these read LIG and SALID. A run of 2 beta stranded transmembrane segments spans residues 242–251 and 254–263; these read LIGLGYTQTL and GVKLTLSALI. Lys266 is modified (N6-acetyllysine; alternate). Residue Lys266 forms a Glycyl lysine isopeptide (Lys-Gly) (interchain with G-Cter in ubiquitin); alternate linkage. Residues 273-282 traverse the membrane as a beta stranded segment; that stretch reads HKVGLGFELE.

The protein belongs to the eukaryotic mitochondrial porin family. In terms of assembly, interacts with ARMC12 in a TBC1D21-dependent manner. Interacts with MISFA. In terms of processing, ubiquitinated by PRKN during mitophagy, leading to its degradation and enhancement of mitophagy. Deubiquitinated by USP30.

The protein resides in the mitochondrion outer membrane. The protein localises to the membrane. It carries out the reaction chloride(in) = chloride(out). The enzyme catalyses K(+)(in) = K(+)(out). Functionally, non-selective voltage-gated ion channel that mediates the transport of anions and cations through the mitochondrion outer membrane and plasma membrane. Forms a high-conducting channel with a stable open state and a voltage-induced closure with a mild preference for anions over cations. Involved in male fertility and sperm mitochondrial sheath formation. The sequence is that of Non-selective voltage-gated ion channel VDAC3 from Bos taurus (Bovine).